Here is a 255-residue protein sequence, read N- to C-terminus: Type III pantothenate kinase (255 aa).

6 to 13 contributes to the ATP binding site; the sequence is DIGNTTSE. Substrate-binding positions include Y100 and 107-110; that span reads GIDR. The Proton acceptor role is filled by D109. D129 contacts K(+). T132 lines the ATP pocket. T184 is a binding site for substrate.

Belongs to the type III pantothenate kinase family. As to quaternary structure, homodimer. NH4(+) serves as cofactor. It depends on K(+) as a cofactor.

The protein resides in the cytoplasm. It carries out the reaction (R)-pantothenate + ATP = (R)-4'-phosphopantothenate + ADP + H(+). Its pathway is cofactor biosynthesis; coenzyme A biosynthesis; CoA from (R)-pantothenate: step 1/5. Catalyzes the phosphorylation of pantothenate (Pan), the first step in CoA biosynthesis. In Persephonella marina (strain DSM 14350 / EX-H1), this protein is Type III pantothenate kinase.